A 398-amino-acid polypeptide reads, in one-letter code: Acetate kinase (398 aa).

Asn7 provides a ligand contact to Mg(2+). Lys14 contacts ATP. Arg92 serves as a coordination point for substrate. Residue Asp149 is the Proton donor/acceptor of the active site. ATP is bound by residues 208–212 (HLGNG), 283–285 (DCR), and 331–335 (GIGEN). Glu385 contacts Mg(2+).

The protein belongs to the acetokinase family. Homodimer. Mg(2+) is required as a cofactor. The cofactor is Mn(2+).

The protein resides in the cytoplasm. The catalysed reaction is acetate + ATP = acetyl phosphate + ADP. It participates in metabolic intermediate biosynthesis; acetyl-CoA biosynthesis; acetyl-CoA from acetate: step 1/2. Catalyzes the formation of acetyl phosphate from acetate and ATP. Can also catalyze the reverse reaction. The sequence is that of Acetate kinase from Fusobacterium nucleatum subsp. nucleatum (strain ATCC 25586 / DSM 15643 / BCRC 10681 / CIP 101130 / JCM 8532 / KCTC 2640 / LMG 13131 / VPI 4355).